The sequence spans 463 residues: Sialic acid-binding Ig-like lectin 9 (463 aa).

Residues Met-1–Gly-17 form the signal peptide. Residues Gln-18 to Gly-348 lie on the Extracellular side of the membrane. Positions Ser-20 to Thr-140 constitute an Ig-like V-type domain. Cystine bridges form between Cys-36–Cys-170, Cys-41–Cys-102, and Cys-164–Cys-213. N-linked (GlcNAc...) asparagine glycosylation occurs at Asn-101. An N-acetylneuraminate-binding site is contributed by Arg-120. Asn-138 and Asn-161 each carry an N-linked (GlcNAc...) asparagine glycan. The region spanning Pro-146–His-229 is the Ig-like C2-type 1 domain. N-linked (GlcNAc...) asparagine glycans are attached at residues Asn-225, Asn-231, Asn-238, and Asn-256. The Ig-like C2-type 2 domain occupies Pro-236 to Ser-336. Cys-272 and Cys-320 are joined by a disulfide. N-linked (GlcNAc...) asparagine glycosylation is present at Asn-334. Residues Val-349–Val-369 form a helical membrane-spanning segment. The Cytoplasmic segment spans residues Val-370–Arg-463. The segment at Pro-380 to Glu-428 is disordered. An ITIM motif motif is present at residues Leu-431–Leu-436. The segment at Trp-444–Arg-463 is disordered. The SLAM-like motif signature appears at Thr-454–Ile-459.

Belongs to the immunoglobulin superfamily. SIGLEC (sialic acid binding Ig-like lectin) family. In terms of tissue distribution, expressed by peripheral blood leukocytes (neutrophils and monocytes but not eosinophils). Found in liver, fetal liver, bone marrow, placenta, spleen and in lower levels in skeletal muscle, fetal brain, stomach, lung, thymus, prostate, brain, mammary, adrenal gland, colon, trachea, cerebellum, testis, small intestine and spinal cordon.

The protein localises to the membrane. In terms of biological role, putative adhesion molecule that mediates sialic-acid dependent binding to cells. Preferentially binds to alpha-2,3- or alpha-2,6-linked sialic acid. The sialic acid recognition site may be masked by cis interactions with sialic acids on the same cell surface. The polypeptide is Sialic acid-binding Ig-like lectin 9 (SIGLEC9) (Homo sapiens (Human)).